We begin with the raw amino-acid sequence, 92 residues long: MKITDVRVRKLTEEGKMKCIVSITFDNLFVVHDIKVIEGHNGLFIAMPSRKVGEGNFRDIAHPINAEMRQVLEDAVLQAYHEALVQWEVAAE.

The protein belongs to the SpoVG family.

Functionally, could be involved in septation. This Clostridioides difficile (strain 630) (Peptoclostridium difficile) protein is Putative septation protein SpoVG.